Consider the following 33-residue polypeptide: Photosystem II reaction center protein Psb30 (33 aa).

A helical transmembrane segment spans residues leucine 5–leucine 25.

This sequence belongs to the Psb30/Ycf12 family. PSII is composed of 1 copy each of membrane proteins PsbA, PsbB, PsbC, PsbD, PsbE, PsbF, PsbH, PsbI, PsbJ, PsbK, PsbL, PsbM, PsbT, PsbX, PsbY, PsbZ, Psb30/Ycf12, peripheral proteins of the oxygen-evolving complex and a large number of cofactors. It forms dimeric complexes.

The protein resides in the plastid. It is found in the chloroplast thylakoid membrane. Functionally, a core subunit of photosystem II (PSII), probably helps stabilize the reaction center. The polypeptide is Photosystem II reaction center protein Psb30 (Psilotum nudum (Whisk fern)).